The following is a 42-amino-acid chain: Delta-hexatoxin-Iw1a (42 aa).

Intrachain disulfides connect C1–C15, C8–C20, C14–C31, and C16–C42.

Belongs to the neurotoxin 06 (delta-actx) family. In terms of tissue distribution, expressed by the venom gland.

Its subcellular location is the secreted. In terms of biological role, inhibits tetrodotoxin-sensitive sodium channels by binding to site 3. It slows the inactivation, causes a prolongation of action potential duration resulting in repetitive firing in autonomic and motor nerve fibers. Does not depolarize the resting potential. Does not affect tetrodotoxin-resistant sodium channels. This lethal neurotoxin is active on both insect and mammalian voltage-gated sodium channels (Nav). The sequence is that of Delta-hexatoxin-Iw1a from Illawarra wisharti (Illawarra funnel-web spider).